A 246-amino-acid chain; its full sequence is MRRLKIIISYDGTHFSGYQVQPGERTVQAEIERVLAIMHKEEKVKVTASGRTDARVHATGQTLHFDTPLAIPTDKYRKALNVQLPRDIRVLSVEEVAHDFHARYSVTGKRYRYIWSCEPIQNPFRRHYTVDTNGVKPDVVAMQKAAQAIIGTHDFSCFCAANTSVQDKVRTVTSLQFEWHGEELHMVIEGNGFLYNMVRIIAGTLWEVGIDRRTIENIALVVASEDRDKAGKTAPPQGLYLEKVFY.

The Nucleophile role is filled by aspartate 53. A substrate-binding site is contributed by tyrosine 111.

Belongs to the tRNA pseudouridine synthase TruA family. As to quaternary structure, homodimer.

It carries out the reaction uridine(38/39/40) in tRNA = pseudouridine(38/39/40) in tRNA. Formation of pseudouridine at positions 38, 39 and 40 in the anticodon stem and loop of transfer RNAs. The sequence is that of tRNA pseudouridine synthase A from Lysinibacillus sphaericus (strain C3-41).